We begin with the raw amino-acid sequence, 327 residues long: Interleukin-12 subunit beta (327 aa).

Positions 1-22 are cleaved as a signal peptide; sequence MCHQKLTISWFAVVLLASPLMA. The 84-residue stretch at 23–106 folds into the Ig-like C2-type domain; that stretch reads IWELEKDVYV…LSHSRLLLHK (84 aa). An intrachain disulfide couples cysteine 50 to cysteine 90. N-linked (GlcNAc...) asparagine glycans are attached at residues asparagine 125, asparagine 135, asparagine 223, and asparagine 315. Residues 238–327 form the Fibronectin type-III domain; it reads PPKNLQLKPL…WSRWVSVPCS (90 aa).

Belongs to the IL-12B family. As to quaternary structure, heterodimer with IL12A; disulfide-linked. The heterodimer is known as interleukin IL-12. Heterodimer with IL23A; disulfide-linked. The heterodimer is known as interleukin IL-23. Also secreted as a monomer. Interacts with NBR1; this interaction promotes IL-12 secretion.

The protein resides in the secreted. Its function is as follows. Cytokine that can act as a growth factor for activated T and NK cells, enhance the lytic activity of NK/lymphokine-activated killer cells, and stimulate the production of IFN-gamma by resting PBMC. Functionally, associates with IL23A to form the IL-23 interleukin, a heterodimeric cytokine which functions in innate and adaptive immunity. IL-23 may constitute with IL-17 an acute response to infection in peripheral tissues. IL-23 binds to a heterodimeric receptor complex composed of IL12RB1 and IL23R, activates the Jak-Stat signaling cascade, stimulates memory rather than naive T-cells and promotes production of pro-inflammatory cytokines. IL-23 induces autoimmune inflammation and thus may be responsible for autoimmune inflammatory diseases and may be important for tumorigenesis. The polypeptide is Interleukin-12 subunit beta (IL12B) (Mesocricetus auratus (Golden hamster)).